Here is a 177-residue protein sequence, read N- to C-terminus: 18.9 kDa heat shock protein (177 aa).

The disordered stretch occupies residues 1 to 35 (MSMITSMLGRKQNAQQKGGGGGGRTGGGGGGEIEP). Residues 17 to 32 (KGGGGGGRTGGGGGGE) show a composition bias toward gly residues. One can recognise a sHSP domain in the interval 63–177 (AAGVPSTASM…PHARIIPITN (115 aa)).

It belongs to the small heat shock protein (HSP20) family. In terms of assembly, may form oligomeric structures.

It is found in the cytoplasm. The protein is 18.9 kDa heat shock protein (HSP18.9) of Oryza sativa subsp. japonica (Rice).